The following is a 506-amino-acid chain: 26S proteasome non-ATPase regulatory subunit 5 (506 aa).

The protein belongs to the proteasome subunit S5B/HSM3 family. As to quaternary structure, interacts with PI31; this interaction is increased by PI31 ADP-ribosylation. Interacts with Rpt2.

Its function is as follows. Acts as a chaperone during the assembly of the 26S proteasome. The polypeptide is 26S proteasome non-ATPase regulatory subunit 5 (Drosophila melanogaster (Fruit fly)).